Here is a 369-residue protein sequence, read N- to C-terminus: Anhydro-N-acetylmuramic acid kinase (369 aa).

Gly-12–Asp-19 provides a ligand contact to ATP.

This sequence belongs to the anhydro-N-acetylmuramic acid kinase family.

The enzyme catalyses 1,6-anhydro-N-acetyl-beta-muramate + ATP + H2O = N-acetyl-D-muramate 6-phosphate + ADP + H(+). It participates in amino-sugar metabolism; 1,6-anhydro-N-acetylmuramate degradation. Its pathway is cell wall biogenesis; peptidoglycan recycling. Catalyzes the specific phosphorylation of 1,6-anhydro-N-acetylmuramic acid (anhMurNAc) with the simultaneous cleavage of the 1,6-anhydro ring, generating MurNAc-6-P. Is required for the utilization of anhMurNAc either imported from the medium or derived from its own cell wall murein, and thus plays a role in cell wall recycling. The sequence is that of Anhydro-N-acetylmuramic acid kinase from Escherichia coli O139:H28 (strain E24377A / ETEC).